We begin with the raw amino-acid sequence, 241 residues long: Biosynthetic peptidoglycan transglycosylase (241 aa).

Residues 18-38 (GVIGIIALWMAGILIFAFLPV) form a helical membrane-spanning segment.

This sequence belongs to the glycosyltransferase 51 family.

It localises to the cell inner membrane. The enzyme catalyses [GlcNAc-(1-&gt;4)-Mur2Ac(oyl-L-Ala-gamma-D-Glu-L-Lys-D-Ala-D-Ala)](n)-di-trans,octa-cis-undecaprenyl diphosphate + beta-D-GlcNAc-(1-&gt;4)-Mur2Ac(oyl-L-Ala-gamma-D-Glu-L-Lys-D-Ala-D-Ala)-di-trans,octa-cis-undecaprenyl diphosphate = [GlcNAc-(1-&gt;4)-Mur2Ac(oyl-L-Ala-gamma-D-Glu-L-Lys-D-Ala-D-Ala)](n+1)-di-trans,octa-cis-undecaprenyl diphosphate + di-trans,octa-cis-undecaprenyl diphosphate + H(+). Its pathway is cell wall biogenesis; peptidoglycan biosynthesis. Functionally, peptidoglycan polymerase that catalyzes glycan chain elongation from lipid-linked precursors. The sequence is that of Biosynthetic peptidoglycan transglycosylase from Yersinia pseudotuberculosis serotype IB (strain PB1/+).